Here is a 280-residue protein sequence, read N- to C-terminus: Probable S-methyl-5'-thioinosine phosphorylase (280 aa).

Residues T8 and 50 to 51 (RH) contribute to the phosphate site. M175 contacts substrate. T176 contributes to the phosphate binding site. A substrate-binding site is contributed by 199-201 (NYA).

Belongs to the PNP/MTAP phosphorylase family. MTAP subfamily. As to quaternary structure, homotrimer.

It catalyses the reaction S-methyl-5'-thioinosine + phosphate = 5-(methylsulfanyl)-alpha-D-ribose 1-phosphate + hypoxanthine. Its pathway is purine metabolism; purine nucleoside salvage. Its function is as follows. Catalyzes the reversible phosphorylation of S-methyl-5'-thioinosine (MTI) to hypoxanthine and 5-methylthioribose-1-phosphate. Involved in the breakdown of S-methyl-5'-thioadenosine (MTA), a major by-product of polyamine biosynthesis. Catabolism of (MTA) occurs via deamination to MTI and phosphorolysis to hypoxanthine. This is Probable S-methyl-5'-thioinosine phosphorylase from Methanothermobacter thermautotrophicus (strain ATCC 29096 / DSM 1053 / JCM 10044 / NBRC 100330 / Delta H) (Methanobacterium thermoautotrophicum).